The following is a 304-amino-acid chain: Quinolinate synthase (304 aa).

2 residues coordinate iminosuccinate: His-24 and Ser-41. Residue Cys-86 participates in [4Fe-4S] cluster binding. Iminosuccinate-binding positions include 112–114 and Ser-129; that span reads YVN. Cys-171 provides a ligand contact to [4Fe-4S] cluster. Iminosuccinate is bound by residues 197 to 199 and Thr-214; that span reads HPE. Residue Cys-259 participates in [4Fe-4S] cluster binding.

Belongs to the quinolinate synthase family. Type 2 subfamily. The cofactor is [4Fe-4S] cluster.

The protein localises to the cytoplasm. The catalysed reaction is iminosuccinate + dihydroxyacetone phosphate = quinolinate + phosphate + 2 H2O + H(+). Its pathway is cofactor biosynthesis; NAD(+) biosynthesis; quinolinate from iminoaspartate: step 1/1. Functionally, catalyzes the condensation of iminoaspartate with dihydroxyacetone phosphate to form quinolinate. This is Quinolinate synthase from Geobacter metallireducens (strain ATCC 53774 / DSM 7210 / GS-15).